Here is a 409-residue protein sequence, read N- to C-terminus: Peptidase T (409 aa).

Histidine 78 contributes to the Zn(2+) binding site. The active site involves aspartate 80. A Zn(2+)-binding site is contributed by aspartate 141. The active-site Proton acceptor is the glutamate 175. Positions 176, 198, and 380 each coordinate Zn(2+).

The protein belongs to the peptidase M20B family. Requires Zn(2+) as cofactor.

It is found in the cytoplasm. The catalysed reaction is Release of the N-terminal residue from a tripeptide.. Its function is as follows. Cleaves the N-terminal amino acid of tripeptides. This chain is Peptidase T, found in Caldanaerobacter subterraneus subsp. tengcongensis (strain DSM 15242 / JCM 11007 / NBRC 100824 / MB4) (Thermoanaerobacter tengcongensis).